We begin with the raw amino-acid sequence, 395 residues long: Neuromedin-U receptor 2 (395 aa).

The Extracellular portion of the chain corresponds to 1–41 (MGKLENASWIHDSLMKYLNSTEEYLAYLCGPKRSDLSLPVS). N6 and N19 each carry an N-linked (GlcNAc...) asparagine glycan. The chain crosses the membrane as a helical span at residues 42-62 (VVYALIFVVGVIGNLLVCLVI). Over 63–74 (ARHQTLKTPTNY) the chain is Cytoplasmic. The helical transmembrane segment at 75-95 (YLFSLAVSDLLVLLLGMPLEV) threads the bilayer. Topologically, residues 96-115 (YELWHNYPFLFGPVGCYFKT) are extracellular. Cysteines 111 and 196 form a disulfide. Residues 116-138 (ALFETVCFASILSVTTVSIERYV) form a helical membrane-spanning segment. At 139-157 (AIVHPFRAKLESTRRRALR) the chain is on the cytoplasmic side. The chain crosses the membrane as a helical span at residues 158 to 178 (ILSLVWSFSVVFSLPNTSIHG). Residues 179-212 (IKFQQFPNGSSVPGSATCTVTKPIWVYNFIIQAT) are Extracellular-facing. N-linked (GlcNAc...) asparagine glycosylation is present at N186. The chain crosses the membrane as a helical span at residues 213 to 233 (SFLFYILPMTLISVLYYLMGL). The Cytoplasmic segment spans residues 234–257 (RLKRDESLEADKVTVNIHRPSRKS). A helical transmembrane segment spans residues 258–278 (VTKMLFVLVLVFAICWTPFHV). The Extracellular portion of the chain corresponds to 279-293 (DRLFFSFVDEWTESL). The helical transmembrane segment at 294 to 314 (AAVFNLIHVVSGVFFYLSSAV) threads the bilayer. Over 315–395 (NPIIYNLLSR…TTVPCVEEVP (81 aa)) the chain is Cytoplasmic.

This sequence belongs to the G-protein coupled receptor 1 family. Expressed primarily in brain tissues, more specifically in medulla and spinal cord. Widespread distribution in peripheral tissues.

Its subcellular location is the cell membrane. Receptor for the neuromedin-U and neuromedin-S neuropeptides. The sequence is that of Neuromedin-U receptor 2 (Nmur2) from Mus musculus (Mouse).